Reading from the N-terminus, the 161-residue chain is MQDAITSVINSSDVQGKYLDTAALEKLKGYFATGELRVRAATTISANAAAIVKEAVAKSLLYSDITRPGGNMYTTRRYAACIRDLDYYLRYSTYAMLAGDPSILDERVLNGLKETYNSLGVPVGATVQAIQAMKEVTASLVGPDAGKEMGVYFDYISSGLS.

Asn-71 is modified (N4-methylasparagine). Cys-81 contributes to the (2R,3E)-phycocyanobilin binding site.

Belongs to the phycobiliprotein family. Heterodimer of an alpha and a beta chain. Post-translationally, contains one covalently linked phycocyanobilin chromophore.

The protein resides in the cellular thylakoid membrane. In terms of biological role, light-harvesting photosynthetic bile pigment-protein from the phycobiliprotein complex. Allophycocyanin has a maximum absorption at approximately 650 nanometers. The chain is Allophycocyanin beta chain (apcB) from Anabaena cylindrica.